A 720-amino-acid polypeptide reads, in one-letter code: Neurochondrin (720 aa).

The protein belongs to the neurochondrin family.

Its subcellular location is the cytoplasm. It localises to the cytosol. The protein resides in the cell projection. The protein localises to the dendrite. It is found in the postsynapse. In terms of biological role, probably involved in signal transduction, in the nervous system. Required for the spatial learning process. May also be involved in neurite outgrowth. The protein is Neurochondrin (ncdn) of Xenopus laevis (African clawed frog).